Here is a 139-residue protein sequence, read N- to C-terminus: D-ribose pyranase (139 aa).

Catalysis depends on histidine 20, which acts as the Proton donor. Substrate-binding positions include aspartate 28, histidine 106, and 128 to 130 (YAN).

It belongs to the RbsD / FucU family. RbsD subfamily. In terms of assembly, homodecamer.

It is found in the cytoplasm. The catalysed reaction is beta-D-ribopyranose = beta-D-ribofuranose. Its pathway is carbohydrate metabolism; D-ribose degradation; D-ribose 5-phosphate from beta-D-ribopyranose: step 1/2. Its function is as follows. Catalyzes the interconversion of beta-pyran and beta-furan forms of D-ribose. The chain is D-ribose pyranase from Escherichia coli O81 (strain ED1a).